The sequence spans 592 residues: 2-succinyl-5-enolpyruvyl-6-hydroxy-3-cyclohexene-1-carboxylate synthase (592 aa).

The protein belongs to the TPP enzyme family. MenD subfamily. In terms of assembly, homodimer. The cofactor is Mg(2+). Requires Mn(2+) as cofactor. Thiamine diphosphate serves as cofactor.

It carries out the reaction isochorismate + 2-oxoglutarate + H(+) = 5-enolpyruvoyl-6-hydroxy-2-succinyl-cyclohex-3-ene-1-carboxylate + CO2. Its pathway is quinol/quinone metabolism; 1,4-dihydroxy-2-naphthoate biosynthesis; 1,4-dihydroxy-2-naphthoate from chorismate: step 2/7. It functions in the pathway quinol/quinone metabolism; menaquinone biosynthesis. In terms of biological role, catalyzes the thiamine diphosphate-dependent decarboxylation of 2-oxoglutarate and the subsequent addition of the resulting succinic semialdehyde-thiamine pyrophosphate anion to isochorismate to yield 2-succinyl-5-enolpyruvyl-6-hydroxy-3-cyclohexene-1-carboxylate (SEPHCHC). The protein is 2-succinyl-5-enolpyruvyl-6-hydroxy-3-cyclohexene-1-carboxylate synthase of Leifsonia xyli subsp. xyli (strain CTCB07).